A 789-amino-acid polypeptide reads, in one-letter code: Bifunctional purine biosynthetic protein PUR2,5 (789 aa).

The segment at 1-428 is GARS; it reads MEKINVLVVG…NRTDIAHRAF (428 aa). Residues 114–321 enclose the ATP-grasp domain; that stretch reads KDFMKKHNIP…LLELMLATVE (208 aa). ATP is bound at residue 140–201; that stretch reads IANSSHNLVI…EEFLEGDELS (62 aa). 2 residues coordinate Mg(2+): glutamate 291 and asparagine 293. Residues 438–773 are AIRS; that stretch reads LTYEDAGVSV…TVYTIGKLVE (336 aa).

The protein in the N-terminal section; belongs to the GARS family. This sequence in the C-terminal section; belongs to the AIR synthase family. Mg(2+) serves as cofactor. Requires Mn(2+) as cofactor.

Its subcellular location is the cytoplasm. The protein resides in the cytosol. The enzyme catalyses 2-formamido-N(1)-(5-O-phospho-beta-D-ribosyl)acetamidine + ATP = 5-amino-1-(5-phospho-beta-D-ribosyl)imidazole + ADP + phosphate + H(+). The catalysed reaction is 5-phospho-beta-D-ribosylamine + glycine + ATP = N(1)-(5-phospho-beta-D-ribosyl)glycinamide + ADP + phosphate + H(+). It functions in the pathway purine metabolism; IMP biosynthesis via de novo pathway; 5-amino-1-(5-phospho-D-ribosyl)imidazole from N(2)-formyl-N(1)-(5-phospho-D-ribosyl)glycinamide: step 2/2. The protein operates within purine metabolism; IMP biosynthesis via de novo pathway; N(1)-(5-phospho-D-ribosyl)glycinamide from 5-phospho-alpha-D-ribose 1-diphosphate: step 2/2. Functionally, catalyzes the second and fifth step in the 'de novo' purine biosynthesis pathway; contains phosphoribosylamine--glycine ligase (GARS) and phosphoribosylformylglycinamidine cyclo-ligase (AIRS) activities. This is Bifunctional purine biosynthetic protein PUR2,5 from Pichia angusta (Yeast).